The primary structure comprises 100 residues: Small ribosomal subunit protein uS14c (100 aa).

Belongs to the universal ribosomal protein uS14 family. Part of the 30S ribosomal subunit.

It is found in the plastid. Its subcellular location is the chloroplast. In terms of biological role, binds 16S rRNA, required for the assembly of 30S particles. This is Small ribosomal subunit protein uS14c from Staurastrum punctulatum (Green alga).